The chain runs to 318 residues: Probable carboxylesterase 1 (318 aa).

An N-acetylmethionine modification is found at M1. The Involved in the stabilization of the negatively charged intermediate by the formation of the oxyanion hole signature appears at H79–G81. Catalysis depends on residues S163, D258, and H290.

It belongs to the 'GDXG' lipolytic enzyme family. As to expression, expressed in roots, stems, flowers and siliques.

The catalysed reaction is a carboxylic ester + H2O = an alcohol + a carboxylate + H(+). Carboxylesterase acting on esters with varying acyl chain length. The chain is Probable carboxylesterase 1 (CXE1) from Arabidopsis thaliana (Mouse-ear cress).